Reading from the N-terminus, the 252-residue chain is Phosphate import ATP-binding protein PstB 1 (252 aa).

Positions 6 to 247 constitute an ABC transporter domain; the sequence is LKVNDLSVYY…PQKQETEDYI (242 aa). 38 to 45 is an ATP binding site; it reads GPSGSGKS.

The protein belongs to the ABC transporter superfamily. Phosphate importer (TC 3.A.1.7) family. In terms of assembly, the complex is composed of two ATP-binding proteins (PstB), two transmembrane proteins (PstC and PstA) and a solute-binding protein (PstS).

The protein localises to the cell membrane. The catalysed reaction is phosphate(out) + ATP + H2O = ADP + 2 phosphate(in) + H(+). Functionally, part of the ABC transporter complex PstSACB involved in phosphate import. Responsible for energy coupling to the transport system. In Streptococcus mutans serotype c (strain ATCC 700610 / UA159), this protein is Phosphate import ATP-binding protein PstB 1.